The chain runs to 502 residues: Probable cytosol aminopeptidase (502 aa).

Positions 269 and 274 each coordinate Mn(2+). K281 is a catalytic residue. D292, D351, and E353 together coordinate Mn(2+). Residue R355 is part of the active site.

It belongs to the peptidase M17 family. Mn(2+) serves as cofactor.

The protein localises to the cytoplasm. It catalyses the reaction Release of an N-terminal amino acid, Xaa-|-Yaa-, in which Xaa is preferably Leu, but may be other amino acids including Pro although not Arg or Lys, and Yaa may be Pro. Amino acid amides and methyl esters are also readily hydrolyzed, but rates on arylamides are exceedingly low.. The enzyme catalyses Release of an N-terminal amino acid, preferentially leucine, but not glutamic or aspartic acids.. In terms of biological role, presumably involved in the processing and regular turnover of intracellular proteins. Catalyzes the removal of unsubstituted N-terminal amino acids from various peptides. The polypeptide is Probable cytosol aminopeptidase (Shewanella piezotolerans (strain WP3 / JCM 13877)).